The primary structure comprises 686 residues: Putative cuticle collagen 99 (686 aa).

Disordered stretches follow at residues 42–79 (PPIG…PVGP) and 163–444 (GPIG…SLVA). Positions 67 to 79 (PPGPPGERGPVGP) are enriched in pro residues. Triple-helical region stretches follow at residues 142-201 (GMPG…KGDR), 230-263 (GPPG…GFDG), and 268-296 (GPKG…EKGD). The span at 231–243 (PPGPPGPPGPPGP) shows a compositional bias: pro residues. Residues 246–256 (RDGRHGMKGDR) are compositionally biased toward basic and acidic residues. A compositionally biased stretch (low complexity) spans 306–318 (GQSVSTVSSSGSQ). Composition is skewed to basic and acidic residues over residues 361 to 373 (EKGE…ETGD) and 401 to 417 (RDGR…HGLR). A triple-helical region region spans residues 394-439 (GPPGPPGRDGRPGEKGEKGEHGLRGDMGLPGPEGTPGKRGRRGRHG). N-linked (GlcNAc...) asparagine glycosylation is found at Asn446 and Asn535. Residues 475-650 (KNVIPGPPGP…TGPDGLPLPY (176 aa)) are disordered. 3 triple-helical region regions span residues 479–536 (PGPP…SGNQ), 538–576 (GPRG…PGPM), and 577–636 (GLRG…PGLD). The span at 540–549 (RGPPGLPGPP) shows a compositional bias: pro residues. Residues 563–581 (QPGALGLPGHPGPMGLRGP) show a composition bias toward low complexity.

Belongs to the cuticular collagen family. In terms of assembly, collagen polypeptide chains are complexed within the cuticle by disulfide bonds and other types of covalent cross-links.

Functionally, nematode cuticles are composed largely of collagen-like proteins. The cuticle functions both as an exoskeleton and as a barrier to protect the worm from its environment. This chain is Putative cuticle collagen 99, found in Caenorhabditis briggsae.